The primary structure comprises 331 residues: ATP-dependent 6-phosphofructokinase (331 aa).

G12 lines the ATP pocket. ADP is bound by residues 22-26 (RGVVR) and 55-60 (RYSVSD). Residues 73–74 (RF) and 103–106 (GDGS) each bind ATP. D104 is a Mg(2+) binding site. 127–129 (TID) provides a ligand contact to substrate. D129 functions as the Proton acceptor in the catalytic mechanism. R156 contributes to the ADP binding site. Substrate is bound by residues R164 and 171-173 (MGR). ADP is bound by residues 187 to 189 (GCE), K213, and 215 to 217 (KKH). Residues E224, R245, and 251 to 254 (HIQR) contribute to the substrate site.

The protein belongs to the phosphofructokinase type A (PFKA) family. ATP-dependent PFK group I subfamily. Prokaryotic clade 'B1' sub-subfamily. As to quaternary structure, homotetramer. Mg(2+) is required as a cofactor.

Its subcellular location is the cytoplasm. It catalyses the reaction beta-D-fructose 6-phosphate + ATP = beta-D-fructose 1,6-bisphosphate + ADP + H(+). Its pathway is carbohydrate degradation; glycolysis; D-glyceraldehyde 3-phosphate and glycerone phosphate from D-glucose: step 3/4. Allosterically activated by ADP and other diphosphonucleosides, and allosterically inhibited by phosphoenolpyruvate. Catalyzes the phosphorylation of D-fructose 6-phosphate to fructose 1,6-bisphosphate by ATP, the first committing step of glycolysis. In Yersinia enterocolitica serotype O:8 / biotype 1B (strain NCTC 13174 / 8081), this protein is ATP-dependent 6-phosphofructokinase.